A 107-amino-acid chain; its full sequence is uncharacterized protein (107 aa).

3 consecutive transmembrane segments (helical) span residues 15–35, 43–63, and 87–107; these read TGSY…LGIS, LYRV…WLSY, and YFPS…IFCF.

The protein resides in the membrane. This is an uncharacterized protein from Saccharomyces cerevisiae (strain ATCC 204508 / S288c) (Baker's yeast).